Reading from the N-terminus, the 374-residue chain is Dihydroorotate dehydrogenase (quinone) (374 aa).

FMN-binding positions include 78-82 (AGFDK) and T102. K82 serves as a coordination point for substrate. A substrate-binding site is contributed by 127 to 131 (NRMGF). FMN is bound by residues N159 and N192. N192 is a binding site for substrate. The Nucleophile role is filled by S195. N197 contacts substrate. FMN-binding residues include K230 and T258. Position 259–260 (259–260 (NT)) interacts with substrate. FMN-binding positions include G287, G316, and 337–338 (YT).

This sequence belongs to the dihydroorotate dehydrogenase family. Type 2 subfamily. Monomer. FMN serves as cofactor.

Its subcellular location is the cell membrane. It carries out the reaction (S)-dihydroorotate + a quinone = orotate + a quinol. The protein operates within pyrimidine metabolism; UMP biosynthesis via de novo pathway; orotate from (S)-dihydroorotate (quinone route): step 1/1. Its function is as follows. Catalyzes the conversion of dihydroorotate to orotate with quinone as electron acceptor. The polypeptide is Dihydroorotate dehydrogenase (quinone) (Acaryochloris marina (strain MBIC 11017)).